The following is a 1057-amino-acid chain: Self-sufficient cytochrome P450 monooxygenase CYP505E3 (1057 aa).

Position 403 (cysteine 403) interacts with heme. A disordered region spans residues 465-488 (PSAAPFSSHARETTNASLPASPGT). The Flavodoxin-like domain occupies 494–634 (MYVLYGSNTG…AFEAWETKLW (141 aa)). Residues 500–504 (SNTGT) and 578–610 (VFGC…QRLV) contribute to the FMN site. The region spanning 671–900 (HDAALGTVIE…RASNAAFHLP (230 aa)) is the FAD-binding FR-type domain.

This sequence in the N-terminal section; belongs to the cytochrome P450 family. The cofactor is FAD. FMN is required as a cofactor. It depends on heme as a cofactor.

The enzyme catalyses 2 oxidized [cytochrome P450] + NADPH = 2 reduced [cytochrome P450] + NADP(+) + H(+). The catalysed reaction is an organic molecule + reduced [NADPH--hemoprotein reductase] + O2 = an alcohol + oxidized [NADPH--hemoprotein reductase] + H2O + H(+). It catalyses the reaction dodecan-1-ol + reduced [NADPH--hemoprotein reductase] + O2 = 1,5-dodecanediol + oxidized [NADPH--hemoprotein reductase] + H2O + H(+). It carries out the reaction dodecan-1-ol + reduced [NADPH--hemoprotein reductase] + O2 = 1,6-dodecanediol + oxidized [NADPH--hemoprotein reductase] + H2O + H(+). Its function is as follows. Self-sufficient cytochrome P450 monooxygenase that catalyzes the regioselective in-chain hydroxylation of fatty alcohols (C9-15) as well as fatty acids (C9-15) at the omega-1 to omega-7 or omega-1 to omega-6 positions, respectively. Is also able to convert naphthalene to 1-naphthol and 1-naphthol further to 1,3-dihydroxynaphthalene. This is Self-sufficient cytochrome P450 monooxygenase CYP505E3 from Phanerodontia chrysosporium (White-rot fungus).